We begin with the raw amino-acid sequence, 257 residues long: MNDIWWQTIGEGDCHLVLLHGWGLNAQVWDCITPQLASHFTLHLVDLPGYGRSGGYGAMSLEAMAQRVLEQAPPQAVWLGWSLGGLVASQVAMMHPERVQALVTVASSPCFAACDDWPGIKPEVLAGFQQQLSDDFQRTVERFLALQTMGTESARQDARALKQAVLSLPMPSAEALNGGLEILRTVDLRQALVGLPIPFLRLYGRLDGLVPRKIVPLLDELWPESESILFDKAAHAPFVSHPAAFCEPLLALKTQLG.

An AB hydrolase-1 domain is found at 15–241 (HLVLLHGWGL…KAAHAPFVSH (227 aa)). Residues W22, 82–83 (SL), and 143–147 (FLALQ) each bind substrate. Residue S82 is the Nucleophile of the active site. Residues D207 and H235 contribute to the active site. H235 is a substrate binding site.

The protein belongs to the AB hydrolase superfamily. Carboxylesterase BioH family. In terms of assembly, monomer.

Its subcellular location is the cytoplasm. It catalyses the reaction 6-carboxyhexanoyl-[ACP] methyl ester + H2O = 6-carboxyhexanoyl-[ACP] + methanol + H(+). It participates in cofactor biosynthesis; biotin biosynthesis. In terms of biological role, the physiological role of BioH is to remove the methyl group introduced by BioC when the pimeloyl moiety is complete. It allows to synthesize pimeloyl-ACP via the fatty acid synthetic pathway through the hydrolysis of the ester bonds of pimeloyl-ACP esters. The polypeptide is Pimeloyl-[acyl-carrier protein] methyl ester esterase (Klebsiella pneumoniae (strain 342)).